The chain runs to 503 residues: Maturase K (503 aa).

Belongs to the intron maturase 2 family. MatK subfamily.

The protein localises to the plastid. It localises to the chloroplast. Its function is as follows. Usually encoded in the trnK tRNA gene intron. Probably assists in splicing its own and other chloroplast group II introns. The chain is Maturase K from Actinodium cunninghamii (Albany daisy).